Here is a 171-residue protein sequence, read N- to C-terminus: 6,7-dimethyl-8-ribityllumazine synthase (171 aa).

5-amino-6-(D-ribitylamino)uracil is bound by residues F24, A58–E60, and A82–I84. Residue E87–T88 participates in (2S)-2-hydroxy-3-oxobutyl phosphate binding. H90 functions as the Proton donor in the catalytic mechanism. N115 serves as a coordination point for 5-amino-6-(D-ribitylamino)uracil. R129 contributes to the (2S)-2-hydroxy-3-oxobutyl phosphate binding site. Residues A150–A171 are disordered. Residues L154–A171 are compositionally biased toward acidic residues.

The protein belongs to the DMRL synthase family.

The enzyme catalyses (2S)-2-hydroxy-3-oxobutyl phosphate + 5-amino-6-(D-ribitylamino)uracil = 6,7-dimethyl-8-(1-D-ribityl)lumazine + phosphate + 2 H2O + H(+). Its pathway is cofactor biosynthesis; riboflavin biosynthesis; riboflavin from 2-hydroxy-3-oxobutyl phosphate and 5-amino-6-(D-ribitylamino)uracil: step 1/2. Its function is as follows. Catalyzes the formation of 6,7-dimethyl-8-ribityllumazine by condensation of 5-amino-6-(D-ribitylamino)uracil with 3,4-dihydroxy-2-butanone 4-phosphate. This is the penultimate step in the biosynthesis of riboflavin. The sequence is that of 6,7-dimethyl-8-ribityllumazine synthase from Burkholderia cenocepacia (strain HI2424).